The primary structure comprises 209 residues: MANKKHKASSQRWLDEHFDDEYVKKAQRLGLRSRAVFKLEEINIKDRLIKPGMKVVDLGAAPGGWSEYAVKVVGDKGQVVACDILPMDAIVGVDFLEGDFREEEVLDALLTRINGKNIDVVMSDMAANMTGNESADSARSMYLVELALDMCSQVLKPNGAFVVKVFQGAGFEDYMKATRAVFKAVKTRKPESSRARSREVYLVATGYKG.

S-adenosyl-L-methionine is bound by residues glycine 63, tryptophan 65, aspartate 83, aspartate 99, and aspartate 124. The Proton acceptor role is filled by lysine 164.

The protein belongs to the class I-like SAM-binding methyltransferase superfamily. RNA methyltransferase RlmE family.

The protein resides in the cytoplasm. It catalyses the reaction uridine(2552) in 23S rRNA + S-adenosyl-L-methionine = 2'-O-methyluridine(2552) in 23S rRNA + S-adenosyl-L-homocysteine + H(+). Its function is as follows. Specifically methylates the uridine in position 2552 of 23S rRNA at the 2'-O position of the ribose in the fully assembled 50S ribosomal subunit. The sequence is that of Ribosomal RNA large subunit methyltransferase E from Colwellia psychrerythraea (strain 34H / ATCC BAA-681) (Vibrio psychroerythus).